The primary structure comprises 875 residues: Serine/threonine-protein kinase D2 (875 aa).

The interval 1–33 (MAAAPSHPAGLPCSPGPGSPPPPGGSDLQSLPP) is disordered. Pro residues predominate over residues 14 to 24 (SPGPGSPPPPG). Ser-26 and Ser-30 each carry phosphoserine. Tyr-87 carries the phosphotyrosine modification. Residues 138–188 (PHALTVHSYRAPAFCDHCGEMLFGLVRQGLKCDGCGLNYHKRCAFSIPNNC) form a Phorbol-ester/DAG-type 1 zinc finger. Phosphoserine is present on residues Ser-197, Ser-198, Ser-200, Ser-203, Ser-206, Ser-211, Ser-212, and Ser-214. The tract at residues 224 to 247 (RSTTDLLPRRPPSSSSSSSSSSFY) is disordered. A compositionally biased stretch (low complexity) spans 236–245 (SSSSSSSSSS). Ser-244 carries the phosphoserine; by CSNK1D and CSNK1E modification. A Phosphoserine modification is found at Ser-245. A Phorbol-ester/DAG-type 2 zinc finger spans residues 265 to 315 (PHTFLIHSYTRPTVCQACKKLLKGLFRQGLQCKDCKFNCHKRCATRVPNDC). The region spanning 398–510 (TTLREGWVVH…WETAIRQALM (113 aa)) is the PH domain. Tyr-408 is subject to Phosphotyrosine. Tyr-439 bears the Phosphotyrosine; by ABL1 mark. Ser-519 bears the Phosphoserine mark. Residues 552–808 (IFPDEVLGSG…VDKSLSHPWL (257 aa)) form the Protein kinase domain. ATP contacts are provided by residues 558-566 (LGSGQFGVV) and Lys-581. The Proton acceptor role is filled by Asp-675. A Phosphoserine; by PKC modification is found at Ser-707. Ser-711 bears the Phosphoserine mark. Tyr-718 is subject to Phosphotyrosine; by ABL1. Residues 725–727 (LNQ) carry the Important for ABL1-mediated Tyr-718 phosphorylation motif. Residue Ser-873 is modified to Phosphoserine; by autocatalysis.

The protein belongs to the protein kinase superfamily. CAMK Ser/Thr protein kinase family. PKD subfamily. Interacts (via C-terminus) with LCK. Interacts (via N-terminus and zing-finger domain 1 and 2) with PRKCD in response to oxidative stress; the interaction is independent of PRKD2 tyrosine phosphorylation. Mg(2+) is required as a cofactor. In terms of processing, phosphorylation of Ser-873 correlates with the activation status of the kinase. Ser-707 is probably phosphorylated by PKC. Phosphorylation at Ser-244 by CSNK1D and CSNK1E promotes nuclear localization and substrate targeting. Phosphorylation at Ser-244, Ser-707 and Ser-711 is required for nuclear localization. Phosphorylated at Tyr-438 by ABL1 in response to oxidative stress. Phosphorylated at Tyr-718 by ABL1 specifically in response to oxidative stress; requires prior phosphorylation at Ser-707 or/and Ser-711.

The protein localises to the cytoplasm. The protein resides in the cell membrane. It is found in the golgi apparatus. Its subcellular location is the trans-Golgi network. It catalyses the reaction L-seryl-[protein] + ATP = O-phospho-L-seryl-[protein] + ADP + H(+). The enzyme catalyses L-threonyl-[protein] + ATP = O-phospho-L-threonyl-[protein] + ADP + H(+). Activated by DAG and phorbol esters. Phorbol-ester/DAG-type domains bind DAG, mediating translocation to membranes. Autophosphorylation of Ser-711 and phosphorylation of Ser-707 by PKC relieves auto-inhibition by the PH domain. Catalytic activity is further increased by phosphorylation at Tyr-718 in response to oxidative stress. Its function is as follows. Serine/threonine-protein kinase that converts transient diacylglycerol (DAG) signals into prolonged physiological effects downstream of PKC, and is involved in the regulation of cell proliferation via MAPK1/3 (ERK1/2) signaling, oxidative stress-induced NF-kappa-B activation, inhibition of HDAC7 transcriptional repression, signaling downstream of T-cell antigen receptor (TCR) and cytokine production, and plays a role in Golgi membrane trafficking, angiogenesis, secretory granule release and cell adhesion. May potentiate mitogenesis induced by the neuropeptide bombesin by mediating an increase in the duration of MAPK1/3 (ERK1/2) signaling, which leads to accumulation of immediate-early gene products including FOS that stimulate cell cycle progression. In response to oxidative stress, is phosphorylated at Tyr-438 and Tyr-718 by ABL1, which leads to the activation of PRKD2 without increasing its catalytic activity, and mediates activation of NF-kappa-B. In response to the activation of the gastrin receptor CCKBR, is phosphorylated at Ser-244 by CSNK1D and CSNK1E, translocates to the nucleus, phosphorylates HDAC7, leading to nuclear export of HDAC7 and inhibition of HDAC7 transcriptional repression of NR4A1/NUR77. Upon TCR stimulation, is activated independently of ZAP70, translocates from the cytoplasm to the nucleus and is required for interleukin-2 (IL2) promoter up-regulation. During adaptive immune responses, is required in peripheral T-lymphocytes for the production of the effector cytokines IL2 and IFNG after TCR engagement and for optimal induction of antibody responses to antigens. In epithelial cells stimulated with lysophosphatidic acid (LPA), is activated through a PKC-dependent pathway and mediates LPA-stimulated interleukin-8 (IL8) secretion via a NF-kappa-B-dependent pathway. During TCR-induced T-cell activation, interacts with and is activated by the tyrosine kinase LCK, which results in the activation of the NFAT transcription factors. In the trans-Golgi network (TGN), regulates the fission of transport vesicles that are on their way to the plasma membrane and in polarized cells is involved in the transport of proteins from the TGN to the basolateral membrane. Plays an important role in endothelial cell proliferation and migration prior to angiogenesis, partly through modulation of the expression of KDR/VEGFR2 and FGFR1, two key growth factor receptors involved in angiogenesis. In secretory pathway, is required for the release of chromogranin-A (CHGA)-containing secretory granules from the TGN. Downstream of PRKCA, plays important roles in angiotensin-2-induced monocyte adhesion to endothelial cells. The polypeptide is Serine/threonine-protein kinase D2 (Prkd2) (Rattus norvegicus (Rat)).